A 361-amino-acid chain; its full sequence is Large ribosomal subunit protein mL45 (361 aa).

Belongs to the mitochondrion-specific ribosomal protein mL45 family.

The protein localises to the mitochondrion. This is Large ribosomal subunit protein mL45 (mrpl-45) from Caenorhabditis briggsae.